Consider the following 205-residue polypeptide: MTAFETESESAAVPVDAAAYREAMSRLASAVHLITTDGPGGRAGFTASAVCSVSDAPPTLLVCINRASSAYAALTQNGTLCVNTLGEGHETVASLFGGRTPVDERFAAGTWRRLPSGAPALTDALVSFDCRIVGRHAVGSHDVLYCAVEAVAASGQADALLYSERRYRTLPRAPRSGSAPAEPARAARALGARPAEGPALALRSA.

Residues 171 to 205 (PRAPRSGSAPAEPARAARALGARPAEGPALALRSA) form a disordered region.

This sequence belongs to the non-flavoprotein flavin reductase family. RutF subfamily.

The enzyme catalyses FMNH2 + NAD(+) = FMN + NADH + 2 H(+). Its function is as follows. Catalyzes the reduction of FMN to FMNH2 which is used to reduce pyrimidine by RutA via the Rut pathway. This Methylorubrum extorquens (strain DSM 6343 / CIP 106787 / DM4) (Methylobacterium extorquens) protein is FMN reductase (NADH) RutF.